A 109-amino-acid chain; its full sequence is Aquaporin-2 (109 aa).

Residues 1–6 are Cytoplasmic-facing; it reads SIAFSR. Residues 7-27 form a helical membrane-spanning segment; the sequence is AVFSEFLATLLFVFFGLGSAL. The Extracellular portion of the chain corresponds to 28–35; it reads NWPQALPS. The chain crosses the membrane as a helical span at residues 36–54; it reads VLQIAMAFGLAIGTLVQTL. Over 55–59 the chain is Cytoplasmic; sequence GHISG. The discontinuously helical intramembrane region spans 60–69; the sequence is AHINPAVTVA. The NPA 1 motif lies at 63–65; that stretch reads NPA. The Cytoplasmic portion of the chain corresponds to 70–80; sequence CLVGCHVSFLR. The helical transmembrane segment at 81 to 102 threads the bilayer; it reads ATFYLAAQLLGAVAGAALLHEL. The Extracellular segment spans residues 103–109; that stretch reads TPPDIRG.

The protein belongs to the MIP/aquaporin (TC 1.A.8) family. In terms of assembly, homotetramer. Post-translationally, serine phosphorylation is necessary and sufficient for expression at the apical membrane. Endocytosis is not phosphorylation-dependent. In terms of processing, N-glycosylated.

It is found in the apical cell membrane. Its subcellular location is the basolateral cell membrane. The protein localises to the cell membrane. It localises to the cytoplasmic vesicle membrane. The protein resides in the golgi apparatus. It is found in the trans-Golgi network membrane. It carries out the reaction H2O(in) = H2O(out). It catalyses the reaction glycerol(in) = glycerol(out). Forms a water-specific channel that provides the plasma membranes of renal collecting duct with high permeability to water, thereby permitting water to move in the direction of an osmotic gradient. Plays an essential role in renal water homeostasis. Could also be permeable to glycerol. This chain is Aquaporin-2, found in Elephas maximus (Indian elephant).